Consider the following 1161-residue polypeptide: Mitogen-activated protein kinase kinase kinase (1161 aa).

The SH3 domain occupies 56-120; the sequence is GDGSLWTALY…PKDFVTDEDP (65 aa). The Protein kinase domain maps to 142 to 402; the sequence is LDIKEVIGSG…KEILKQLESI (261 aa). Residues 148–156 and lysine 169 each bind ATP; that span reads IGSGGFCKV. Aspartate 264 serves as the catalytic Proton acceptor. Threonine 300 carries the post-translational modification Phosphothreonine; by autocatalysis. The residue at position 304 (serine 304) is a Phosphoserine; by autocatalysis. Leucine-zipper stretches follow at residues 426 to 447 and 461 to 482; these read IAGV…EEQL and LKIR…ELVM. Serine 525 and serine 560 each carry phosphoserine. 2 disordered regions span residues 560-615 and 658-678; these read SQLS…GSGG and TTNN…NQLN. Residues 571–583 are compositionally biased toward polar residues; the sequence is AQTSTHSSFSKSA. Residues 591 to 601 show a composition bias toward low complexity; sequence QQQNQQQVASL. A phosphoserine mark is found at serine 685, serine 773, and serine 792. The interval 790–830 is disordered; that stretch reads GNSPAVGRKKHSLDSSSHHPPANGSNSFALPNQLTLPSEDN. The segment covering 812 to 830 has biased composition (polar residues); the sequence is NGSNSFALPNQLTLPSEDN. Threonine 862 carries the phosphothreonine modification. 3 disordered regions span residues 988–1014, 1045–1093, and 1137–1161; these read RSAS…EAVN, EQRQ…SAGS, and GGSS…LERC. A compositionally biased stretch (low complexity) spans 989 to 1010; sequence SASPSLSSSSTTASASPSIAST. Serine 993 carries the phosphoserine modification. The span at 1052 to 1063 shows a compositional bias: basic residues; the sequence is NQKKQRPKHITK. Positions 1073–1086 are enriched in basic and acidic residues; the sequence is GQHHEHDDHNDPQH. Positions 1150-1161 are enriched in polar residues; sequence PQTQSCEQLERC.

Belongs to the protein kinase superfamily. STE Ser/Thr protein kinase family. MAP kinase kinase kinase subfamily. Homodimer. It depends on Mg(2+) as a cofactor. Post-translationally, autophosphorylation on serine and threonine residues within the activation loop plays a role in enzyme activation. As to expression, expressed both maternally and zygotically. Expressed uniformly in large quantities in the early embryo (stages 1-4). In the late embryo, expression is ubiquitous, but expression levels are dramatically reduced. Expressed in the adult head and thorax, and in S2 cells.

The catalysed reaction is L-seryl-[protein] + ATP = O-phospho-L-seryl-[protein] + ADP + H(+). It catalyses the reaction L-threonyl-[protein] + ATP = O-phospho-L-threonyl-[protein] + ADP + H(+). Its activity is regulated as follows. Homodimerization via the leucine zipper domains is required for autophosphorylation and subsequent activation. Activated by C6-ceramide. In terms of biological role, activates the JUN N-terminal pathway during dorsal closure. The protein is Mitogen-activated protein kinase kinase kinase of Drosophila melanogaster (Fruit fly).